The following is a 744-amino-acid chain: Catalase-peroxidase (744 aa).

An N-terminal signal peptide occupies residues 1–22; sequence MSPRARRCTDRCARMSERSMNA. Positions 114 to 234 form a cross-link, tryptophyl-tyrosyl-methioninium (Trp-Tyr) (with M-260); it reads WHSAGTYRLA…LGATEMGLIY (121 aa). The active-site Proton acceptor is the H115. Positions 234–260 form a cross-link, tryptophyl-tyrosyl-methioninium (Tyr-Met) (with W-114); it reads YVNPEGPDRNGDPISAAKFIRETFARM. A heme b-binding site is contributed by H275.

It belongs to the peroxidase family. Peroxidase/catalase subfamily. Homodimer or homotetramer. Requires heme b as cofactor. Post-translationally, formation of the three residue Trp-Tyr-Met cross-link is important for the catalase, but not the peroxidase activity of the enzyme.

It catalyses the reaction H2O2 + AH2 = A + 2 H2O. The enzyme catalyses 2 H2O2 = O2 + 2 H2O. Bifunctional enzyme with both catalase and broad-spectrum peroxidase activity. In Azorhizobium caulinodans (strain ATCC 43989 / DSM 5975 / JCM 20966 / LMG 6465 / NBRC 14845 / NCIMB 13405 / ORS 571), this protein is Catalase-peroxidase.